A 1041-amino-acid chain; its full sequence is Importin-9 (1041 aa).

At Ala2 the chain carries N-acetylalanine. An Importin N-terminal domain is found at 43–119 (AEEQIKVLEV…RELLPNGLRE (77 aa)). The disordered stretch occupies residues 936–967 (QATPAEWNQDDSNDMWEDQEEEEEEEEDGLAG). Over residues 943–964 (NQDDSNDMWEDQEEEEEEEEDG) the composition is skewed to acidic residues.

The protein belongs to the importin beta family. Interacts with histones H2A, H2B, H3 and H4. The binding is coupled to RanGTP cycles. Interacts with AKIRIN2; promoting association with pre-assembled proteasomes. Associates with pre-assembled proteasomes; interaction is indirect and mediated via interaction with AKIRIN2. Interacts with PPP2R1A and PPP2R1B.

Its subcellular location is the cytoplasm. It localises to the nucleus. In terms of biological role, nuclear transport receptor that mediates nuclear import of proteins, such as histones, proteasome and actin. Serves as receptor for nuclear localization signals (NLS) in cargo substrates. Is thought to mediate docking of the importin/substrate complex to the nuclear pore complex (NPC) through binding to nucleoporin and the complex is subsequently translocated through the pore by an energy requiring, Ran-dependent mechanism. At the nucleoplasmic side of the NPC, Ran binds to the importin, the importin/substrate complex dissociates and importin is re-exported from the nucleus to the cytoplasm where GTP hydrolysis releases Ran. The directionality of nuclear import is thought to be conferred by an asymmetric distribution of the GTP- and GDP-bound forms of Ran between the cytoplasm and nucleus. Mediates the import of pre-assembled proteasomes into the nucleus; AKIRIN2 acts as a molecular bridge between IPO9 and the proteasome complex. Mediates the nuclear import of histones H2A, H2B, H4 and H4. In addition to nuclear import, also acts as a chaperone for histones by preventing inappropriate non-nucleosomal interactions. Mediates the nuclear import of actin. This Mus musculus (Mouse) protein is Importin-9.